The primary structure comprises 467 residues: Cysteine--tRNA ligase (467 aa).

Residue C27 coordinates Zn(2+). The 'HIGH' region motif lies at 29–39 (PTVYNYIHIGN). Positions 207, 232, and 236 each coordinate Zn(2+). The short motif at 264–268 (KMSKS) is the 'KMSKS' region element. ATP is bound at residue K267.

The protein belongs to the class-I aminoacyl-tRNA synthetase family. Monomer. It depends on Zn(2+) as a cofactor.

The protein localises to the cytoplasm. The enzyme catalyses tRNA(Cys) + L-cysteine + ATP = L-cysteinyl-tRNA(Cys) + AMP + diphosphate. The chain is Cysteine--tRNA ligase from Caldanaerobacter subterraneus subsp. tengcongensis (strain DSM 15242 / JCM 11007 / NBRC 100824 / MB4) (Thermoanaerobacter tengcongensis).